The primary structure comprises 554 residues: 3-(3-hydroxy-phenyl)propionate/3-hydroxycinnamic acid hydroxylase (554 aa).

FAD contacts are provided by residues 17–46 (QVAI…VVEK) and 285–295 (FRIDRVLLAGD).

It belongs to the PheA/TfdB FAD monooxygenase family. FAD serves as cofactor.

It carries out the reaction 3-(3-hydroxyphenyl)propanoate + NADH + O2 + H(+) = 3-(2,3-dihydroxyphenyl)propanoate + NAD(+) + H2O. It catalyses the reaction (2E)-3-(3-hydroxyphenyl)prop-2-enoate + NADH + O2 + H(+) = (2E)-3-(2,3-dihydroxyphenyl)prop-2-enoate + NAD(+) + H2O. Its pathway is aromatic compound metabolism; 3-phenylpropanoate degradation. In terms of biological role, catalyzes the insertion of one atom of molecular oxygen into position 2 of the phenyl ring of 3-(3-hydroxyphenyl)propionate (3-HPP) and hydroxycinnamic acid (3HCI). This chain is 3-(3-hydroxy-phenyl)propionate/3-hydroxycinnamic acid hydroxylase, found in Shigella sonnei (strain Ss046).